The chain runs to 294 residues: 2-dehydro-3-deoxy-phosphogluconate/2-dehydro-3-deoxy-6-phosphogalactonate aldolase (294 aa).

Substrate-binding positions include 43 to 44 (TT), 130 to 132 (YNY), and 155 to 157 (KDT). The active-site Schiff-base intermediate with substrate is the lysine 155.

Belongs to the DapA family. KDPG aldolase subfamily. In terms of assembly, homotetramer; dimer of dimers.

It catalyses the reaction 2-dehydro-3-deoxy-6-phospho-D-gluconate = D-glyceraldehyde 3-phosphate + pyruvate. It carries out the reaction 2-dehydro-3-deoxy-6-phospho-D-galactonate = D-glyceraldehyde 3-phosphate + pyruvate. The protein operates within carbohydrate acid metabolism; 2-dehydro-3-deoxy-D-gluconate degradation; D-glyceraldehyde 3-phosphate and pyruvate from 2-dehydro-3-deoxy-D-gluconate: step 2/2. Involved in the degradation of glucose and galactose via the Entner-Doudoroff pathway. Catalyzes the reversible cleavage of 2-keto-3-deoxy-6-phosphogluconate (KDPG) and 2-keto-3-deoxygluconate (KDG) forming pyruvate and glyceraldehyde 3-phosphate or glyceraldehyde, respectively. It is also able to catalyze the reversible cleavage of 2-keto-3-deoxy-6-phosphogalactonate (KDPGal) and 2-keto-3-deoxygalactonate (KDGal). It is equally active with both D- and L-glyceraldehyde. The sequence is that of 2-dehydro-3-deoxy-phosphogluconate/2-dehydro-3-deoxy-6-phosphogalactonate aldolase from Saccharolobus solfataricus (Sulfolobus solfataricus).